Reading from the N-terminus, the 387-residue chain is 3-ketoacyl-CoA thiolase (387 aa).

Cysteine 91 serves as the catalytic Acyl-thioester intermediate. Catalysis depends on proton acceptor residues histidine 343 and cysteine 373.

Belongs to the thiolase-like superfamily. Thiolase family. As to quaternary structure, heterotetramer of two alpha chains (FadB) and two beta chains (FadA).

The protein localises to the cytoplasm. It carries out the reaction an acyl-CoA + acetyl-CoA = a 3-oxoacyl-CoA + CoA. The protein operates within lipid metabolism; fatty acid beta-oxidation. In terms of biological role, catalyzes the final step of fatty acid oxidation in which acetyl-CoA is released and the CoA ester of a fatty acid two carbons shorter is formed. This chain is 3-ketoacyl-CoA thiolase, found in Shewanella loihica (strain ATCC BAA-1088 / PV-4).